Here is a 320-residue protein sequence, read N- to C-terminus: Ferrochelatase (320 aa).

Residues His194 and Glu275 each contribute to the Fe cation site.

This sequence belongs to the ferrochelatase family.

The protein resides in the cytoplasm. It carries out the reaction heme b + 2 H(+) = protoporphyrin IX + Fe(2+). It functions in the pathway porphyrin-containing compound metabolism; protoheme biosynthesis; protoheme from protoporphyrin-IX: step 1/1. Its function is as follows. Catalyzes the ferrous insertion into protoporphyrin IX. In Pectobacterium atrosepticum (strain SCRI 1043 / ATCC BAA-672) (Erwinia carotovora subsp. atroseptica), this protein is Ferrochelatase.